A 570-amino-acid chain; its full sequence is Sulfite reductase [NADPH] hemoprotein beta-component (570 aa).

The [4Fe-4S] cluster site is built by Cys-434, Cys-440, Cys-479, and Cys-483. Cys-483 lines the siroheme pocket.

The protein belongs to the nitrite and sulfite reductase 4Fe-4S domain family. In terms of assembly, alpha(8)-beta(8). The alpha component is a flavoprotein, the beta component is a hemoprotein. Siroheme serves as cofactor. Requires [4Fe-4S] cluster as cofactor.

The enzyme catalyses hydrogen sulfide + 3 NADP(+) + 3 H2O = sulfite + 3 NADPH + 4 H(+). It functions in the pathway sulfur metabolism; hydrogen sulfide biosynthesis; hydrogen sulfide from sulfite (NADPH route): step 1/1. Functionally, component of the sulfite reductase complex that catalyzes the 6-electron reduction of sulfite to sulfide. This is one of several activities required for the biosynthesis of L-cysteine from sulfate. This Klebsiella pneumoniae subsp. pneumoniae (strain ATCC 700721 / MGH 78578) protein is Sulfite reductase [NADPH] hemoprotein beta-component.